Consider the following 276-residue polypeptide: Small ribosomal subunit protein uS2 (276 aa).

Serine 2 carries the N-acetylserine modification.

It belongs to the universal ribosomal protein uS2 family. Component of the small ribosomal subunit. Mature ribosomes consist of a small (40S) and a large (60S) subunit. The 40S subunit contains about 33 different proteins and 1 molecule of RNA (18S). The 60S subunit contains about 49 different proteins and 3 molecules of RNA (28S, 5.8S and 5S). Interacts with rps-21.

The protein localises to the cytoplasm. Required for the assembly and/or stability of the 40S ribosomal subunit. Required for the processing of the 20S rRNA-precursor to mature 18S rRNA in a late step of the maturation of 40S ribosomal subunits. Involved in cold-warm shock-induced translocation of the RNA exosome components from the nucleolus to nucleoplasm. This Caenorhabditis elegans protein is Small ribosomal subunit protein uS2.